Reading from the N-terminus, the 311-residue chain is Malate dehydrogenase (311 aa).

Residues 7–13 (GAAGGIG) and D34 contribute to the NAD(+) site. Residues R81 and R87 each contribute to the substrate site. Residues N94 and 117 to 119 (ITN) contribute to the NAD(+) site. 2 residues coordinate substrate: N119 and R153. Residue H177 is the Proton acceptor of the active site. M227 serves as a coordination point for NAD(+).

Belongs to the LDH/MDH superfamily. MDH type 1 family. As to quaternary structure, homodimer.

It catalyses the reaction (S)-malate + NAD(+) = oxaloacetate + NADH + H(+). Its function is as follows. Catalyzes the reversible oxidation of malate to oxaloacetate. This chain is Malate dehydrogenase, found in Aliivibrio fischeri (strain ATCC 700601 / ES114) (Vibrio fischeri).